A 92-amino-acid chain; its full sequence is N(2)-fixation sustaining protein CowN (92 aa).

The protein belongs to the CowN family.

Functionally, is required to sustain N(2)-dependent growth in the presence of low levels of carbon monoxide (CO). Probably acts by protecting the N(2) fixation ability of the nitrogenase complex, which is inactivated in the presence of CO. This chain is N(2)-fixation sustaining protein CowN, found in Rhodopseudomonas palustris (strain BisA53).